We begin with the raw amino-acid sequence, 100 residues long: Urease subunit gamma (100 aa).

The protein belongs to the urease gamma subunit family. In terms of assembly, heterotrimer of UreA (gamma), UreB (beta) and UreC (alpha) subunits. Three heterotrimers associate to form the active enzyme.

Its subcellular location is the cytoplasm. It catalyses the reaction urea + 2 H2O + H(+) = hydrogencarbonate + 2 NH4(+). It participates in nitrogen metabolism; urea degradation; CO(2) and NH(3) from urea (urease route): step 1/1. In Pseudomonas fluorescens (strain Pf0-1), this protein is Urease subunit gamma.